A 434-amino-acid polypeptide reads, in one-letter code: Methylenetetrahydrofolate--tRNA-(uracil-5-)-methyltransferase TrmFO (434 aa).

FAD is bound at residue 9–14 (GAGLAG).

This sequence belongs to the MnmG family. TrmFO subfamily. FAD is required as a cofactor.

The protein resides in the cytoplasm. It catalyses the reaction uridine(54) in tRNA + (6R)-5,10-methylene-5,6,7,8-tetrahydrofolate + NADH + H(+) = 5-methyluridine(54) in tRNA + (6S)-5,6,7,8-tetrahydrofolate + NAD(+). The enzyme catalyses uridine(54) in tRNA + (6R)-5,10-methylene-5,6,7,8-tetrahydrofolate + NADPH + H(+) = 5-methyluridine(54) in tRNA + (6S)-5,6,7,8-tetrahydrofolate + NADP(+). Functionally, catalyzes the folate-dependent formation of 5-methyl-uridine at position 54 (M-5-U54) in all tRNAs. The polypeptide is Methylenetetrahydrofolate--tRNA-(uracil-5-)-methyltransferase TrmFO (Bacillus pumilus (strain SAFR-032)).